The chain runs to 193 residues: uncharacterized protein (193 aa).

Residues 158–193 (YNPIYDDHNPLPPEKKKSILSRTRSTKLSSGEITPV) form a disordered region. Residues 162-174 (YDDHNPLPPEKKK) are compositionally biased toward basic and acidic residues. Polar residues predominate over residues 177-193 (LSRTRSTKLSSGEITPV).

This is an uncharacterized protein from Micromonas pusilla (Picoplanktonic green alga).